Reading from the N-terminus, the 224-residue chain is Ribosomal RNA small subunit methyltransferase G (224 aa).

S-adenosyl-L-methionine-binding positions include glycine 89, phenylalanine 94, 140–141 (AE), and arginine 153.

The protein belongs to the methyltransferase superfamily. RNA methyltransferase RsmG family.

The protein resides in the cytoplasm. Specifically methylates the N7 position of a guanine in 16S rRNA. In Bacteroides fragilis (strain YCH46), this protein is Ribosomal RNA small subunit methyltransferase G.